The primary structure comprises 525 residues: Cytochrome P450 4V2 (525 aa).

Residues 13 to 33 (LLLWGAASALSLAGASLVLSL) traverse the membrane as a helical segment. Heme is bound by residues Glu329 and Cys467.

The protein belongs to the cytochrome P450 family. Heme is required as a cofactor. Broadly expressed. Detected in heart, brain, placenta, lung, liver, skeletal muscle, kidney, pancreas, retina, retinal pigment epithelium (RPE) and lymphocytes.

It localises to the endoplasmic reticulum membrane. The catalysed reaction is dodecanoate + reduced [NADPH--hemoprotein reductase] + O2 = 12-hydroxydodecanoate + oxidized [NADPH--hemoprotein reductase] + H2O + H(+). It carries out the reaction tetradecanoate + reduced [NADPH--hemoprotein reductase] + O2 = 14-hydroxytetradecanoate + oxidized [NADPH--hemoprotein reductase] + H2O + H(+). It catalyses the reaction hexadecanoate + reduced [NADPH--hemoprotein reductase] + O2 = 16-hydroxyhexadecanoate + oxidized [NADPH--hemoprotein reductase] + H2O + H(+). The enzyme catalyses (5Z,8Z,11Z,14Z,17Z)-eicosapentaenoate + reduced [NADPH--hemoprotein reductase] + O2 = 20-hydroxy-(5Z,8Z,11Z,14Z,17Z)-eicosapentaenoate + oxidized [NADPH--hemoprotein reductase] + H2O + H(+). The catalysed reaction is (4Z,7Z,10Z,13Z,16Z,19Z)-docosahexaenoate + reduced [NADPH--hemoprotein reductase] + O2 = 22-hydroxy-(4Z,7Z,10Z,13Z,16Z,19Z)-docosahexaenoate + oxidized [NADPH--hemoprotein reductase] + H2O + H(+). The protein operates within lipid metabolism; fatty acid metabolism. With respect to regulation, inhibited by N-hydroxy-N'-(4-n-butyl-2-methylphenyl formamidine)(HET0016) with an IC(50) of 38 nM. Its function is as follows. A cytochrome P450 monooxygenase involved in fatty acid metabolism in the eye. Catalyzes the omega-hydroxylation of polyunsaturated fatty acids (PUFAs) docosahexaenoate (DHA) and its precursor eicosapentaenoate (EPA), and may contribute to the homeostasis of these retinal PUFAs. Omega hydroxylates saturated fatty acids such as laurate, myristate and palmitate, the catalytic efficiency decreasing in the following order: myristate &gt; laurate &gt; palmitate (C14&gt;C12&gt;C16). Mechanistically, uses molecular oxygen inserting one oxygen atom into a substrate, and reducing the second into a water molecule, with two electrons provided by NADPH via cytochrome P450 reductase (CPR; NADPH-ferrihemoprotein reductase). The sequence is that of Cytochrome P450 4V2 (CYP4V2) from Homo sapiens (Human).